We begin with the raw amino-acid sequence, 102 residues long: Large ribosomal subunit protein bL21 (102 aa).

This sequence belongs to the bacterial ribosomal protein bL21 family. As to quaternary structure, part of the 50S ribosomal subunit. Contacts protein L20.

Functionally, this protein binds to 23S rRNA in the presence of protein L20. This is Large ribosomal subunit protein bL21 from Pelobacter propionicus (strain DSM 2379 / NBRC 103807 / OttBd1).